Consider the following 93-residue polypeptide: Small ribosomal subunit protein uS19 (93 aa).

It belongs to the universal ribosomal protein uS19 family.

In terms of biological role, protein S19 forms a complex with S13 that binds strongly to the 16S ribosomal RNA. The chain is Small ribosomal subunit protein uS19 from Latilactobacillus sakei subsp. sakei (strain 23K) (Lactobacillus sakei subsp. sakei).